The following is a 366-amino-acid chain: GTPase Obg (366 aa).

In terms of domain architecture, Obg spans 1 to 162; it reads MRFVDEATIN…RRLRLELKIL (162 aa). In terms of domain architecture, OBG-type G spans 163–335; that stretch reads ADAGLLGLPN…VVDAMWRLRD (173 aa). Residues 169 to 176, 194 to 198, 218 to 221, 288 to 291, and 316 to 318 each bind GTP; these read GLPNAGKS, FTTLT, DIPG, NKID, and SAM. Residues Ser176 and Thr196 each contribute to the Mg(2+) site.

Belongs to the TRAFAC class OBG-HflX-like GTPase superfamily. OBG GTPase family. Monomer. Mg(2+) serves as cofactor.

It localises to the cytoplasm. Its function is as follows. An essential GTPase which binds GTP, GDP and possibly (p)ppGpp with moderate affinity, with high nucleotide exchange rates and a fairly low GTP hydrolysis rate. Plays a role in control of the cell cycle, stress response, ribosome biogenesis and in those bacteria that undergo differentiation, in morphogenesis control. The protein is GTPase Obg of Nitratidesulfovibrio vulgaris (strain ATCC 29579 / DSM 644 / CCUG 34227 / NCIMB 8303 / VKM B-1760 / Hildenborough) (Desulfovibrio vulgaris).